Here is an 84-residue protein sequence, read N- to C-terminus: Alpha-mammal toxin Aah3 (84 aa).

The signal sequence occupies residues 1-19; that stretch reads MNYLVMISLALLLMTGVES. The LCN-type CS-alpha/beta domain occupies 21–82; that stretch reads RDGYIVDSKN…PIKDPSYKCH (62 aa). Cystine bridges form between Cys31/Cys81, Cys35/Cys53, Cys39/Cys63, and Cys43/Cys65. Residue Arg84 is a propeptide, removed by a carboxypeptidase.

It belongs to the long (4 C-C) scorpion toxin superfamily. Sodium channel inhibitor family. Alpha subfamily. Expressed by the venom gland.

Its subcellular location is the secreted. In terms of biological role, alpha toxins bind voltage-independently at site-3 of sodium channels (Nav) and inhibit the inactivation of the activated channels, thereby blocking neuronal transmission. This Androctonus australis (Sahara scorpion) protein is Alpha-mammal toxin Aah3.